We begin with the raw amino-acid sequence, 150 residues long: Large ribosomal subunit protein bL9 (150 aa).

This sequence belongs to the bacterial ribosomal protein bL9 family.

Functionally, binds to the 23S rRNA. This Corynebacterium kroppenstedtii (strain DSM 44385 / JCM 11950 / CIP 105744 / CCUG 35717) protein is Large ribosomal subunit protein bL9.